The chain runs to 408 residues: UPF0761 membrane protein NMC0462 (408 aa).

The next 6 helical transmembrane spans lie at 43-63, 100-120, 139-159, 176-196, 210-230, and 248-268; these read LLALVPVLTVMVAVASIFPVF, LTAIGSVMLVVTSLMLIRTID, FLVYWALLTFGPLSLGVGISF, WSGALRTAATLTFMTLLLWGL, AFVGALATAFCLETARSLFTW, and VPFFLLWLNLLWTLVLGGAVL.

The protein belongs to the UPF0761 family.

It is found in the cell inner membrane. This is UPF0761 membrane protein NMC0462 from Neisseria meningitidis serogroup C / serotype 2a (strain ATCC 700532 / DSM 15464 / FAM18).